The following is a 404-amino-acid chain: Double-stranded RNA-binding protein 5 (404 aa).

DRBM domains are found at residues 1-70 (MYKN…RLSL) and 87-155 (VYKN…SLKQ). Disordered regions lie at residues 195-236 (RRRR…STEE), 263-320 (GGRT…RRNA), and 336-362 (RRRP…FSDP). Residues 263 to 280 (GGRTQDTASPAPAAAAAS) are compositionally biased toward low complexity. Basic residues predominate over residues 302 to 316 (AGAHAARRHAARQGG).

Functionally, binds double-stranded RNA. The protein is Double-stranded RNA-binding protein 5 (DRB5) of Oryza sativa subsp. japonica (Rice).